We begin with the raw amino-acid sequence, 83 residues long: Small ribosomal subunit protein bS20 (83 aa).

Belongs to the bacterial ribosomal protein bS20 family.

Functionally, binds directly to 16S ribosomal RNA. This Leuconostoc citreum (strain KM20) protein is Small ribosomal subunit protein bS20.